A 310-amino-acid chain; its full sequence is Ribosomal protein L11 methyltransferase (310 aa).

Positions 153, 174, 196, and 239 each coordinate S-adenosyl-L-methionine.

Belongs to the methyltransferase superfamily. PrmA family.

It is found in the cytoplasm. It carries out the reaction L-lysyl-[protein] + 3 S-adenosyl-L-methionine = N(6),N(6),N(6)-trimethyl-L-lysyl-[protein] + 3 S-adenosyl-L-homocysteine + 3 H(+). Its function is as follows. Methylates ribosomal protein L11. In Janthinobacterium sp. (strain Marseille) (Minibacterium massiliensis), this protein is Ribosomal protein L11 methyltransferase.